The sequence spans 450 residues: Neuraminidase (450 aa).

Over 1–6 (MNPNQK) the chain is Intravirion. The helical transmembrane segment at 7 to 27 (IITIGSICMVVGIISLMLQIG) threads the bilayer. The tract at residues 11-33 (GSICMVVGIISLMLQIGNIISVW) is involved in apical transport and lipid raft association. The Virion surface portion of the chain corresponds to 28–450 (NIISVWVSHI…GAELPFTIDK (423 aa)). The hypervariable stalk region stretch occupies residues 36-71 (HIIQTWHPNQPEPCNQSINFYTEQAAASVTLAGNSS). N-linked (GlcNAc...) asparagine; by host glycans are attached at residues N50 and N69. Residues 72–450 (LCPISGWAIY…GAELPFTIDK (379 aa)) form a head of neuraminidase region. Disulfide bonds link C73-C398, C105-C110, C165-C212, C214-C219, C260-C273, C262-C271, C299-C316, and C402-C427. R99 is a binding site for substrate. N127 carries an N-linked (GlcNAc...) asparagine; by host glycan. D132 acts as the Proton donor/acceptor in catalysis. R133 is a substrate binding site. N216 is a glycosylation site (N-linked (GlcNAc...) asparagine; by host). Substrate is bound at residue 258-259 (EE). R274 is a substrate binding site. D275, G279, and D305 together coordinate Ca(2+). Substrate is bound at residue R349. Catalysis depends on Y383, which acts as the Nucleophile.

Belongs to the glycosyl hydrolase 34 family. As to quaternary structure, homotetramer. Ca(2+) serves as cofactor. N-glycosylated.

It localises to the virion membrane. It is found in the host apical cell membrane. It catalyses the reaction Hydrolysis of alpha-(2-&gt;3)-, alpha-(2-&gt;6)-, alpha-(2-&gt;8)- glycosidic linkages of terminal sialic acid residues in oligosaccharides, glycoproteins, glycolipids, colominic acid and synthetic substrates.. With respect to regulation, inhibited by the neuraminidase inhibitors zanamivir (Relenza) and oseltamivir (Tamiflu). These drugs interfere with the release of progeny virus from infected cells and are effective against all influenza strains. Resistance to neuraminidase inhibitors is quite rare. Its function is as follows. Catalyzes the removal of terminal sialic acid residues from viral and cellular glycoconjugates. Cleaves off the terminal sialic acids on the glycosylated HA during virus budding to facilitate virus release. Additionally helps virus spread through the circulation by further removing sialic acids from the cell surface. These cleavages prevent self-aggregation and ensure the efficient spread of the progeny virus from cell to cell. Otherwise, infection would be limited to one round of replication. Described as a receptor-destroying enzyme because it cleaves a terminal sialic acid from the cellular receptors. May facilitate viral invasion of the upper airways by cleaving the sialic acid moieties on the mucin of the airway epithelial cells. Likely to plays a role in the budding process through its association with lipid rafts during intracellular transport. May additionally display a raft-association independent effect on budding. Plays a role in the determination of host range restriction on replication and virulence. Sialidase activity in late endosome/lysosome traffic seems to enhance virus replication. The protein is Neuraminidase of Aves (Cat).